A 400-amino-acid polypeptide reads, in one-letter code: Chaperone protein DnaJ (400 aa).

Residues Asp4–Gly69 enclose the J domain. The CR-type zinc finger occupies Gly156 to Glu237. Residues Cys169, Cys172, Cys185, Cys188, Cys211, Cys214, Cys225, and Cys228 each contribute to the Zn(2+) site. 4 CXXCXGXG motif repeats span residues Cys169–Gly176, Cys185–Gly192, Cys211–Gly218, and Cys225–Gly232.

Belongs to the DnaJ family. Homodimer. Requires Zn(2+) as cofactor.

It is found in the cytoplasm. Its function is as follows. Participates actively in the response to hyperosmotic and heat shock by preventing the aggregation of stress-denatured proteins and by disaggregating proteins, also in an autonomous, DnaK-independent fashion. Unfolded proteins bind initially to DnaJ; upon interaction with the DnaJ-bound protein, DnaK hydrolyzes its bound ATP, resulting in the formation of a stable complex. GrpE releases ADP from DnaK; ATP binding to DnaK triggers the release of the substrate protein, thus completing the reaction cycle. Several rounds of ATP-dependent interactions between DnaJ, DnaK and GrpE are required for fully efficient folding. Also involved, together with DnaK and GrpE, in the DNA replication of plasmids through activation of initiation proteins. The protein is Chaperone protein DnaJ of Chlorobium chlorochromatii (strain CaD3).